Here is a 281-residue protein sequence, read N- to C-terminus: MEMO1 family protein Pars_0062 (281 aa).

This sequence belongs to the MEMO1 family.

In Pyrobaculum arsenaticum (strain DSM 13514 / JCM 11321 / PZ6), this protein is MEMO1 family protein Pars_0062.